Here is a 212-residue protein sequence, read N- to C-terminus: Molybdenum cofactor guanylyltransferase (212 aa).

GTP is bound by residues 14–16, Lys27, Asn55, Asp73, and Asp108; that span reads LAG. Asp108 contacts Mg(2+).

The protein belongs to the MobA family. Monomer. It depends on Mg(2+) as a cofactor.

The protein localises to the cytoplasm. It carries out the reaction Mo-molybdopterin + GTP + H(+) = Mo-molybdopterin guanine dinucleotide + diphosphate. Functionally, transfers a GMP moiety from GTP to Mo-molybdopterin (Mo-MPT) cofactor (Moco or molybdenum cofactor) to form Mo-molybdopterin guanine dinucleotide (Mo-MGD) cofactor. This chain is Molybdenum cofactor guanylyltransferase, found in Bradyrhizobium sp. (strain ORS 278).